We begin with the raw amino-acid sequence, 302 residues long: Serine/threonine-protein phosphatase alpha-3 isoform (302 aa).

Mn(2+) is bound by residues Asp-62, His-64, Asp-90, and Asn-122. The active-site Proton donor is the His-123. Positions 171 and 246 each coordinate Mn(2+).

The protein belongs to the PPP phosphatase family. PP-1 subfamily. In terms of assembly, interacts with Nop17l. It depends on Mn(2+) as a cofactor.

It catalyses the reaction O-phospho-L-seryl-[protein] + H2O = L-seryl-[protein] + phosphate. It carries out the reaction O-phospho-L-threonyl-[protein] + H2O = L-threonyl-[protein] + phosphate. This Drosophila melanogaster (Fruit fly) protein is Serine/threonine-protein phosphatase alpha-3 isoform (Pp1-13C).